The chain runs to 3601 residues: Protein SPIRRIG (3601 aa).

7 disordered regions span residues 17 to 50 (AQSS…PSSS), 398 to 426 (SSNH…ADFS), 449 to 476 (PAEP…TSSV), 638 to 657 (QYSG…SFRK), 1954 to 1993 (HIND…SLGS), 2009 to 2049 (ENIL…DFQD), and 2715 to 2747 (TTHV…EKEL). Residues 32-50 (PPSSSSSSSSPSFTYPSSS) are compositionally biased toward low complexity. Composition is skewed to polar residues over residues 416-426 (NTNSTENADFS) and 458-476 (SRSS…TSSV). Residues 1974-1991 (STKTSISVGSFPQGQVSL) are compositionally biased toward polar residues. Over residues 2027-2048 (EDVKKQDDHHVGPSASSERDFQ) the composition is skewed to basic and acidic residues. The span at 2715-2731 (TTHVKSETGSPRHSSSA) shows a compositional bias: polar residues. Basic and acidic residues predominate over residues 2732 to 2747 (KMDETNGREEKSEKEL). The 168-residue stretch at 2760-2927 (EHLEKIRFRY…EREEVFKNLV (168 aa)) folds into the BEACH-type PH domain. A BEACH domain is found at 2952 to 3244 (GGRLFKLMAK…QLFPKAHVKR (293 aa)). WD repeat units lie at residues 3328–3367 (HESN…PRGS), 3378–3417 (AHTA…FVRQ), 3464–3507 (PSDS…DPVS), and 3540–3579 (FHKQ…LRAS).

Interacts with DCP1. Expressed in flowers, leaves, stems, hypocotyls and roots.

The protein localises to the cytoplasm. Its subcellular location is the P-body. Its function is as follows. Involved in cell morphogenesis. May have a function in membrane fusion or membrane composition. Required for salt stress tolerance. Regulates the salt stress-dependent post-transcriptional stabilization, cytoplasmic agglomeration, and localization to P-bodies of a subset of salt stress-regulated mRNAs. This is Protein SPIRRIG from Arabidopsis thaliana (Mouse-ear cress).